The following is a 416-amino-acid chain: Adipocyte plasma membrane-associated protein (416 aa).

The disordered stretch occupies residues 1-32 (MSEADGLRQRRPLRPQVVTDDDGQAPEAKDGS). S2 carries the post-translational modification N-acetylserine. The Cytoplasmic segment spans residues 2-40 (SEADGLRQRRPLRPQVVTDDDGQAPEAKDGSSFSGRVFR). A Phosphothreonine modification is found at T19. The chain crosses the membrane as a helical; Signal-anchor for type II membrane protein span at residues 41–61 (VTFLMLAVSLTVPLLGAMMLL). Residues 62-416 (ESPIDPQPLS…FLCRLSLQAV (355 aa)) lie on the Extracellular side of the membrane. 2 N-linked (GlcNAc...) asparagine glycosylation sites follow: N160 and N196.

The protein belongs to the strictosidine synthase family. Liver, glomerular and tubular structures of the kidney, endothelial cells, arterial wall and pancreatic islets of Langerhans (at protein level). Found ubiquitously in adult as well as in embryonic tissues. In adult tissue, the highest expression is found in the liver, placenta and heart. Found on the cell surface of monocytes. In embryonic tissue, the highest expression levels is found in the liver and the kidney.

The protein localises to the membrane. In terms of biological role, exhibits strong arylesterase activity with beta-naphthyl acetate and phenyl acetate. May play a role in adipocyte differentiation. The polypeptide is Adipocyte plasma membrane-associated protein (APMAP) (Homo sapiens (Human)).